The primary structure comprises 173 residues: Large ribosomal subunit protein uL10 (173 aa).

The protein belongs to the universal ribosomal protein uL10 family. Part of the ribosomal stalk of the 50S ribosomal subunit. The N-terminus interacts with L11 and the large rRNA to form the base of the stalk. The C-terminus forms an elongated spine to which L12 dimers bind in a sequential fashion forming a multimeric L10(L12)X complex.

In terms of biological role, forms part of the ribosomal stalk, playing a central role in the interaction of the ribosome with GTP-bound translation factors. This chain is Large ribosomal subunit protein uL10, found in Corynebacterium aurimucosum (strain ATCC 700975 / DSM 44827 / CIP 107346 / CN-1) (Corynebacterium nigricans).